Here is a 558-residue protein sequence, read N- to C-terminus: MEAAAQFFVESPDVVYGPEAIEAQYEYRTTRVSREGGVLKVHPTSTRFTFRTARQVPRLGVMLVGWGGNNGSTLTAAVLANRLRLSWPTRSGRKEANYYGSLTQAGTVSLGLDAEGQEVFVPFSAVLPMVAPNDLVFDGWDISSLNLAEAMRRAKVLDWGLQEQLWPHMEALRPRPSVYIPEFIAANQSARADNLIPGSRAQQLEQIRRDIRDFRSSAGLDKVIVLWTANTERFCEVIPGLNDTAENLLRTIELGLEVSPSTLFAVASILEGCAFLNGSPQNTLVPGALELAWQHRVFVGGDDFKSGQTKVKSVLVDFLIGSGLKTMSIVSYNHLGNNDGENLSAPLQFRSKEVSKSNVVDDMVQSNPVLYTPGEEPDHCVVIKYVPYVGDSKRALDEYTSELMLGGTNTLVLHNTCEDSLLAAPIMLDLALLTELCQRVSFCTDMDPEPQTFHPVLSLLSFLFKAPLVPPGSPVVNALFRQRSCIENILRACVGLPPQNHMLLEHKMERPGPSLKRVGPVAATYPMLNKKGPVPAATNGCTGDANGHLQEEPPMPTT.

21 residues coordinate NAD(+): G67, G68, N69, N70, D141, S177, V178, Q188, R191, T228, A229, N230, T231, G278, S279, D303, S306, N337, N338, D339, and K352. At S279 the chain carries Phosphoserine. S357 carries the phosphoserine modification. NAD(+)-binding residues include G390, D391, D419, and S420. The interval 537 to 558 (ATNGCTGDANGHLQEEPPMPTT) is disordered.

Belongs to the myo-inositol 1-phosphate synthase family. NAD(+) is required as a cofactor. Phosphorylation at Ser-279 and Ser-357 may be associated with a decrease in activity. As to expression, highly expressed in testis, ovary, heart, placenta and pancreas. Weakly expressed in blood leukocyte, thymus, skeletal muscle and colon.

The protein resides in the cytoplasm. It carries out the reaction D-glucose 6-phosphate = 1D-myo-inositol 3-phosphate. Its pathway is polyol metabolism; myo-inositol biosynthesis; myo-inositol from D-glucose 6-phosphate: step 1/2. Its activity is regulated as follows. Inhibited by mood-stabilizing drugs such as valproate (VPA) and lithium. Functionally, key enzyme in myo-inositol biosynthesis pathway that catalyzes the conversion of glucose 6-phosphate to 1-myo-inositol 1-phosphate in a NAD-dependent manner. Rate-limiting enzyme in the synthesis of all inositol-containing compounds. The protein is Inositol-3-phosphate synthase 1 (ISYNA1) of Homo sapiens (Human).